Here is a 193-residue protein sequence, read N- to C-terminus: Adenylate kinase (193 aa).

11–16 contacts ATP; it reads GSGKGT. The segment at 31 to 60 is NMP; it reads STGDIFRANVKGETPLGLEAKKYMDAGDYV. AMP contacts are provided by residues Thr32, Arg37, 58 to 60, 86 to 89, and Gln93; these read DYV and GYPR. Residues 127-137 are LID; sequence GRAKESGRSDD. Residue Arg128 coordinates ATP. Residues Arg134 and Arg145 each contribute to the AMP site. An ATP-binding site is contributed by Gly173.

The protein belongs to the adenylate kinase family. As to quaternary structure, monomer.

The protein resides in the cytoplasm. The enzyme catalyses AMP + ATP = 2 ADP. Its pathway is purine metabolism; AMP biosynthesis via salvage pathway; AMP from ADP: step 1/1. Catalyzes the reversible transfer of the terminal phosphate group between ATP and AMP. Plays an important role in cellular energy homeostasis and in adenine nucleotide metabolism. The sequence is that of Adenylate kinase from Renibacterium salmoninarum (strain ATCC 33209 / DSM 20767 / JCM 11484 / NBRC 15589 / NCIMB 2235).